The sequence spans 286 residues: Isopentenyl-diphosphate Delta-isomerase II (286 aa).

In terms of domain architecture, Nudix hydrolase spans 104–256 (MLHRAFSVFL…GLKLSPWFRL (153 aa)). Active-site residues include C141 and E203.

It belongs to the IPP isomerase type 1 family.

The enzyme catalyses isopentenyl diphosphate = dimethylallyl diphosphate. The protein operates within isoprenoid biosynthesis; dimethylallyl diphosphate biosynthesis; dimethylallyl diphosphate from isopentenyl diphosphate: step 1/1. It participates in porphyrin-containing compound metabolism; chlorophyll biosynthesis. Functionally, catalyzes the 1,3-allylic rearrangement of the homoallylic substrate isopentenyl (IPP) to its highly electrophilic allylic isomer, dimethylallyl diphosphate (DMAPP). This chain is Isopentenyl-diphosphate Delta-isomerase II (IPI2), found in Clarkia breweri (Fairy fans).